A 1045-amino-acid polypeptide reads, in one-letter code: Endoglucanase B (1045 aa).

An N-terminal signal peptide occupies residues 1 to 33 (MLRQVPRTLVAGGSALAVAVGVLVAPLATGAAA). The interval 34–492 (APTYNYAEAL…LASFPTPEQP (459 aa)) is catalytic. The active-site Nucleophile is the D91. Catalysis depends on residues H410, D449, and E458. The CBM3 domain occupies 493–642 (DGDQLFVEAM…STLVWGKEPT (150 aa)). 4 linker ('hinge') (Pro-Thr box) regions span residues 644–650 (TTTDTTP), 734–748 (AAVT…ETEP), 831–846 (APVT…DTVA), and 931–944 (SPVT…TSTP). 3 Fibronectin type-III domains span residues 653–743 (TPGT…TDTT), 751–840 (TPGT…TAAP), and 849–940 (VPGT…TLPV). In terms of domain architecture, CBM2 spans 939–1045 (PVTSTPSCTV…SFTVNGEVCG (107 aa)). C946 and C1044 are joined by a disulfide.

This sequence belongs to the glycosyl hydrolase 9 (cellulase E) family.

The catalysed reaction is Endohydrolysis of (1-&gt;4)-beta-D-glucosidic linkages in cellulose, lichenin and cereal beta-D-glucans.. Functionally, the biological conversion of cellulose to glucose generally requires three types of hydrolytic enzymes: (1) Endoglucanases which cut internal beta-1,4-glucosidic bonds; (2) Exocellobiohydrolases that cut the disaccharide cellobiose from the non-reducing end of the cellulose polymer chain; (3) Beta-1,4-glucosidases which hydrolyze the cellobiose and other short cello-oligosaccharides to glucose. The protein is Endoglucanase B (cenB) of Cellulomonas fimi.